The chain runs to 247 residues: tRNA pseudouridine synthase A (247 aa).

Asp57 acts as the Nucleophile in catalysis. Substrate is bound at residue Tyr115.

It belongs to the tRNA pseudouridine synthase TruA family. As to quaternary structure, homodimer.

It catalyses the reaction uridine(38/39/40) in tRNA = pseudouridine(38/39/40) in tRNA. Formation of pseudouridine at positions 38, 39 and 40 in the anticodon stem and loop of transfer RNAs. The chain is tRNA pseudouridine synthase A from Chlorobaculum tepidum (strain ATCC 49652 / DSM 12025 / NBRC 103806 / TLS) (Chlorobium tepidum).